Here is a 119-residue protein sequence, read N- to C-terminus: Large ribosomal subunit protein uL18 (119 aa).

Residues 1–25 form a disordered region; sequence MITKIDKNKVRKKRHARVRSKISGT. The segment covering 9 to 20 has biased composition (basic residues); the sequence is KVRKKRHARVRS.

The protein belongs to the universal ribosomal protein uL18 family. In terms of assembly, part of the 50S ribosomal subunit; part of the 5S rRNA/L5/L18/L25 subcomplex. Contacts the 5S and 23S rRNAs.

Functionally, this is one of the proteins that bind and probably mediate the attachment of the 5S RNA into the large ribosomal subunit, where it forms part of the central protuberance. The protein is Large ribosomal subunit protein uL18 of Listeria innocua serovar 6a (strain ATCC BAA-680 / CLIP 11262).